Here is a 231-residue protein sequence, read N- to C-terminus: A-type ATP synthase subunit D (231 aa).

It belongs to the V-ATPase D subunit family. As to quaternary structure, has multiple subunits with at least A(3), B(3), C, D, E, F, H, I and proteolipid K(x).

It is found in the cell membrane. Functionally, component of the A-type ATP synthase that produces ATP from ADP in the presence of a proton gradient across the membrane. The chain is A-type ATP synthase subunit D from Methanobrevibacter smithii (strain ATCC 35061 / DSM 861 / OCM 144 / PS).